A 333-amino-acid chain; its full sequence is Putative fimbrium anchoring subunit Fim4B (333 aa).

Positions 1 to 20 (MRNTRYGFLVLLSSLLMLTG) are cleaved as a signal peptide. The N-palmitoyl cysteine moiety is linked to residue Cys-21. Cys-21 is lipidated: S-diacylglycerol cysteine. The segment at 274–333 (ENAGTGEDGKPTPPPEIELPPDDKIEVDKPETPPNPDGGGGMGGNVDGWGPEDNVELPVN) is disordered. A compositionally biased stretch (basic and acidic residues) spans 294 to 304 (PDDKIEVDKPE). Positions 310–320 (DGGGGMGGNVD) are enriched in gly residues.

This sequence belongs to the bacteroidetes fimbrillin superfamily. FimB/Mfa2 family.

It localises to the cell outer membrane. Functionally, putative fimbrium anchoring subunit. This is Putative fimbrium anchoring subunit Fim4B from Bacteroides ovatus (strain ATCC 8483 / DSM 1896 / JCM 5824 / BCRC 10623 / CCUG 4943 / NCTC 11153).